The sequence spans 211 residues: Probable superoxide dismutase [Mn], mitochondrial (211 aa).

Mn(2+) is bound by residues His-36, His-84, Asp-173, and His-177.

The protein belongs to the iron/manganese superoxide dismutase family. As to quaternary structure, homotetramer. It depends on Mn(2+) as a cofactor.

Its subcellular location is the mitochondrion matrix. The enzyme catalyses 2 superoxide + 2 H(+) = H2O2 + O2. Its function is as follows. Destroys superoxide anion radicals which are normally produced within the cells and which are toxic to biological systems. This Debaryomyces hansenii (strain ATCC 36239 / CBS 767 / BCRC 21394 / JCM 1990 / NBRC 0083 / IGC 2968) (Yeast) protein is Probable superoxide dismutase [Mn], mitochondrial.